The primary structure comprises 220 residues: Thiopurine S-methyltransferase (220 aa).

The S-adenosyl-L-methionine site is built by Trp-10, Leu-45, Glu-66, and Arg-123.

It belongs to the class I-like SAM-binding methyltransferase superfamily. TPMT family.

It localises to the cytoplasm. It catalyses the reaction S-adenosyl-L-methionine + a thiopurine = S-adenosyl-L-homocysteine + a thiopurine S-methylether.. The protein is Thiopurine S-methyltransferase of Nitrosospira multiformis (strain ATCC 25196 / NCIMB 11849 / C 71).